Here is a 347-residue protein sequence, read N- to C-terminus: 3-isopropylmalate dehydrogenase (347 aa).

The substrate site is built by Arg-87, Arg-97, Arg-121, and Asp-212. 3 residues coordinate Mg(2+): Asp-212, Asp-236, and Asp-240. 272 to 284 (GSAPDIAGQGTAD) lines the NAD(+) pocket.

It belongs to the isocitrate and isopropylmalate dehydrogenases family. LeuB type 2 subfamily. Homodimer. Requires Mg(2+) as cofactor. Mn(2+) is required as a cofactor.

The protein resides in the cytoplasm. The catalysed reaction is (2R,3S)-3-isopropylmalate + NAD(+) = 4-methyl-2-oxopentanoate + CO2 + NADH. Its pathway is amino-acid biosynthesis; L-leucine biosynthesis; L-leucine from 3-methyl-2-oxobutanoate: step 3/4. Functionally, catalyzes the oxidation of 3-carboxy-2-hydroxy-4-methylpentanoate (3-isopropylmalate) to 3-carboxy-4-methyl-2-oxopentanoate. The product decarboxylates to 4-methyl-2 oxopentanoate. This Saccharopolyspora erythraea (strain ATCC 11635 / DSM 40517 / JCM 4748 / NBRC 13426 / NCIMB 8594 / NRRL 2338) protein is 3-isopropylmalate dehydrogenase.